We begin with the raw amino-acid sequence, 595 residues long: Phosphomethylpyrimidine synthase (595 aa).

Over residues 97–120 (GRDVRPEDNGFTKDDDPRAAREVF) the composition is skewed to basic and acidic residues. Residues 97-134 (GRDVRPEDNGFTKDDDPRAAREVFPRTSSHKPLRAKKG) form a disordered region. Basic residues predominate over residues 124 to 133 (SSHKPLRAKK). Substrate is bound by residues Asn202, Met231, Tyr260, His296, 316–318 (SRG), 357–360 (DGLR), and Glu396. His400 contributes to the Zn(2+) binding site. Residue Tyr423 coordinates substrate. His464 contributes to the Zn(2+) binding site. [4Fe-4S] cluster is bound by residues Cys544, Cys547, and Cys552.

This sequence belongs to the ThiC family. [4Fe-4S] cluster serves as cofactor.

It catalyses the reaction 5-amino-1-(5-phospho-beta-D-ribosyl)imidazole + S-adenosyl-L-methionine = 4-amino-2-methyl-5-(phosphooxymethyl)pyrimidine + CO + 5'-deoxyadenosine + formate + L-methionine + 3 H(+). The protein operates within cofactor biosynthesis; thiamine diphosphate biosynthesis. In terms of biological role, catalyzes the synthesis of the hydroxymethylpyrimidine phosphate (HMP-P) moiety of thiamine from aminoimidazole ribotide (AIR) in a radical S-adenosyl-L-methionine (SAM)-dependent reaction. The sequence is that of Phosphomethylpyrimidine synthase from Halalkalibacterium halodurans (strain ATCC BAA-125 / DSM 18197 / FERM 7344 / JCM 9153 / C-125) (Bacillus halodurans).